A 385-amino-acid chain; its full sequence is Pectate lyase E (385 aa).

The N-terminal stretch at 1 to 30 is a signal peptide; it reads MKNTRVRSIGTKSLLAAVVTAALMATSAYA. D164 contacts Ca(2+). Repeat unit 1 spans residues 177–182; it reads DHVTIS. Residues 177–218 are 2 X 6 AA approximate repeats; that stretch reads DHVTISDGSFTDDKYTTKDGEKYVQHDGALDIKKGSDYVTIS. Ca(2+) is bound at residue D207. The stretch at 213–218 is repeat 2; it reads DYVTIS. R260 is a catalytic residue.

It belongs to the polysaccharide lyase 1 family. PLBC subfamily. It depends on Ca(2+) as a cofactor.

The protein localises to the secreted. It carries out the reaction Eliminative cleavage of (1-&gt;4)-alpha-D-galacturonan to give oligosaccharides with 4-deoxy-alpha-D-galact-4-enuronosyl groups at their non-reducing ends.. The protein operates within glycan metabolism; pectin degradation; 2-dehydro-3-deoxy-D-gluconate from pectin: step 2/5. Involved in maceration and soft-rotting of plant tissue. The sequence is that of Pectate lyase E (pelE) from Dickeya chrysanthemi (Pectobacterium chrysanthemi).